The chain runs to 201 residues: Probable quinol oxidase subunit 3 (201 aa).

A run of 5 helical transmembrane segments spans residues 20–40 (LGFWIFITAEFALFGTLFATL), 62–82 (LVLIMTFALLFSSYTCGIAIY), 91–111 (LMMFWMIITLLLGLVFVGFEI), 133–153 (FFILLGTHGCHVSLGIVWAIC), and 172–192 (FIVSLYWHFLDVVWVFIFTAV).

The protein belongs to the cytochrome c oxidase subunit 3 family.

The protein resides in the cell membrane. It carries out the reaction 2 a quinol + O2 = 2 a quinone + 2 H2O. Catalyzes quinol oxidation with the concomitant reduction of oxygen to water. In Staphylococcus aureus (strain MSSA476), this protein is Probable quinol oxidase subunit 3 (qoxC).